The following is a 175-amino-acid chain: MNYFALFNLTPSFDVDKAALAATYQQLQKLTHPDRFATASERDKLIALQKNAQVNDGYQVLKTPLSRAEHMLELRGVELQHEQKTMQDGAFLMQQMEWREQLDDAQHASDPLTALESLDDEVAADIKRLLSELGGFLEQSDDAANENAANLVRKLKFLFKLRHEIEIKEDALSDF.

In terms of domain architecture, J spans 2 to 76 (NYFALFNLTP…RAEHMLELRG (75 aa)).

Belongs to the HscB family. As to quaternary structure, interacts with HscA and stimulates its ATPase activity.

Its function is as follows. Co-chaperone involved in the maturation of iron-sulfur cluster-containing proteins. Seems to help targeting proteins to be folded toward HscA. The polypeptide is Co-chaperone protein HscB homolog (Pseudoalteromonas atlantica (strain T6c / ATCC BAA-1087)).